A 353-amino-acid polypeptide reads, in one-letter code: MAIKYGRPIELREVSRRDGAAASPALDLAIRPRRNRKAEWARRMVRENVLTTDDLIWPLFLIDGNNKREQIASMPGVERLSVDQAVREAERAMKLTIPCIALFPYTDPSLRDEEGSEACNPNNLVCQAVRAIKKEFPEIGVLCDVALDPFTSHGHDGLIADGAILNDETVAVLVRQALVQAEAGCDIIAPSDMMDGRVAAIREGLDQAGLIDVQIMAYAAKYASAFYGPFRDAIGSAKTLTGDKRTYQMDSANTDEALREVELDISEGADMVMVKPGMPYLDVVRRVKDTFAMPTFAYQVSGEYAMIAAAAGNGWLDGDRAMMESLLAFKRAGADGVLSYFAPKAAEKLRTQG.

The active-site Schiff-base intermediate with substrate is lysine 221. The 5-aminolevulinate site is built by arginine 231 and lysine 244. Mg(2+) is bound at residue glutamate 260. Lysine 275 (schiff-base intermediate with substrate) is an active-site residue. Residues serine 301 and tyrosine 340 each contribute to the 5-aminolevulinate site.

The protein belongs to the ALAD family. As to quaternary structure, homooctamer. Mg(2+) is required as a cofactor.

The enzyme catalyses 2 5-aminolevulinate = porphobilinogen + 2 H2O + H(+). Its pathway is porphyrin-containing compound metabolism; protoporphyrin-IX biosynthesis; coproporphyrinogen-III from 5-aminolevulinate: step 1/4. Its function is as follows. Catalyzes an early step in the biosynthesis of tetrapyrroles. Binds two molecules of 5-aminolevulinate per subunit, each at a distinct site, and catalyzes their condensation to form porphobilinogen. Required for nodule development. The polypeptide is Delta-aminolevulinic acid dehydratase (hemB) (Bradyrhizobium diazoefficiens (strain JCM 10833 / BCRC 13528 / IAM 13628 / NBRC 14792 / USDA 110)).